A 432-amino-acid polypeptide reads, in one-letter code: Glutamyl-tRNA reductase (432 aa).

Substrate-binding positions include Thr49–Arg52, Ser109, Glu114–Gln116, and Gln120. Residue Cys50 is the Nucleophile of the active site. Gly198–Ser203 contributes to the NADP(+) binding site.

Belongs to the glutamyl-tRNA reductase family. In terms of assembly, homodimer.

It carries out the reaction (S)-4-amino-5-oxopentanoate + tRNA(Glu) + NADP(+) = L-glutamyl-tRNA(Glu) + NADPH + H(+). Its pathway is porphyrin-containing compound metabolism; protoporphyrin-IX biosynthesis; 5-aminolevulinate from L-glutamyl-tRNA(Glu): step 1/2. It functions in the pathway porphyrin-containing compound metabolism; chlorophyll biosynthesis. Its function is as follows. Catalyzes the NADPH-dependent reduction of glutamyl-tRNA(Glu) to glutamate 1-semialdehyde (GSA). This is Glutamyl-tRNA reductase from Parasynechococcus marenigrum (strain WH8102).